We begin with the raw amino-acid sequence, 358 residues long: Peptide chain release factor 1 (358 aa).

Position 233 is an N5-methylglutamine (Gln-233).

This sequence belongs to the prokaryotic/mitochondrial release factor family. Methylated by PrmC. Methylation increases the termination efficiency of RF1.

Its subcellular location is the cytoplasm. Peptide chain release factor 1 directs the termination of translation in response to the peptide chain termination codons UAG and UAA. This is Peptide chain release factor 1 from Agathobacter rectalis (strain ATCC 33656 / DSM 3377 / JCM 17463 / KCTC 5835 / VPI 0990) (Eubacterium rectale).